Here is a 391-residue protein sequence, read N- to C-terminus: Oxygen-dependent coproporphyrinogen-III oxidase, chloroplastic (391 aa).

The segment covering 1 to 13 (MASSLLTTPSQTL) has biased composition (polar residues). The tract at residues 1-34 (MASSLLTTPSQTLAPNPAAARARRSSPAAAQVSF) is disordered. The span at 14-30 (APNPAAARARRSSPAAA) shows a compositional bias: low complexity. Residues 125-134 (VLQDGNVFEK) are important for dimerization. Serine 179 contacts substrate. Histidine 193 (proton donor) is an active-site residue. Substrate contacts are provided by residues 195 to 197 (NYR) and 349 to 354 (GGRIES). The tract at residues 331–366 (YVEFNLVYDRGTTFGLKTGGRIESILVSLPLTARWE) is important for dimerization.

Belongs to the aerobic coproporphyrinogen-III oxidase family. In terms of assembly, homodimer.

It localises to the plastid. Its subcellular location is the chloroplast. It catalyses the reaction coproporphyrinogen III + O2 + 2 H(+) = protoporphyrinogen IX + 2 CO2 + 2 H2O. It functions in the pathway porphyrin-containing compound metabolism; protoporphyrin-IX biosynthesis; protoporphyrinogen-IX from coproporphyrinogen-III (O2 route): step 1/1. Its function is as follows. Involved in the heme and chlorophyll biosynthesis. Catalyzes the aerobic oxidative decarboxylation of propionate groups of rings A and B of coproporphyrinogen-III to yield the vinyl groups in protoporphyrinogen-IX. This Hordeum vulgare (Barley) protein is Oxygen-dependent coproporphyrinogen-III oxidase, chloroplastic (CPX).